The following is a 319-amino-acid chain: Cytochrome c biogenesis protein CcsA (319 aa).

Helical transmembrane passes span 9-29 (ILTH…LITL), 44-64 (GVIG…AYSG), 71-91 (LYES…FPYL), 143-163 (MVLG…LLVI), 225-245 (IISL…VWAN), 259-273 (TWAF…IYLH), and 286-306 (AIVA…VNLL).

This sequence belongs to the CcmF/CycK/Ccl1/NrfE/CcsA family. As to quaternary structure, may interact with Ccs1.

Its subcellular location is the plastid. It is found in the chloroplast thylakoid membrane. Its function is as follows. Required during biogenesis of c-type cytochromes (cytochrome c6 and cytochrome f) at the step of heme attachment. This is Cytochrome c biogenesis protein CcsA from Oenothera argillicola (Appalachian evening primrose).